Reading from the N-terminus, the 202-residue chain is Pyridoxal 5'-phosphate synthase subunit PdxT (202 aa).

Residue 49-51 (GES) coordinates L-glutamine. Residue cysteine 81 is the Nucleophile of the active site. L-glutamine is bound by residues arginine 110 and 139 to 140 (IR). Residues histidine 182 and glutamate 184 each act as charge relay system in the active site.

It belongs to the glutaminase PdxT/SNO family. As to quaternary structure, in the presence of PdxS, forms a dodecamer of heterodimers. Only shows activity in the heterodimer.

It catalyses the reaction aldehydo-D-ribose 5-phosphate + D-glyceraldehyde 3-phosphate + L-glutamine = pyridoxal 5'-phosphate + L-glutamate + phosphate + 3 H2O + H(+). The catalysed reaction is L-glutamine + H2O = L-glutamate + NH4(+). The protein operates within cofactor biosynthesis; pyridoxal 5'-phosphate biosynthesis. Catalyzes the hydrolysis of glutamine to glutamate and ammonia as part of the biosynthesis of pyridoxal 5'-phosphate. The resulting ammonia molecule is channeled to the active site of PdxS. The polypeptide is Pyridoxal 5'-phosphate synthase subunit PdxT (Rhodococcus opacus (strain B4)).